The primary structure comprises 272 residues: 2-C-methyl-D-erythritol 4-phosphate cytidylyltransferase (272 aa).

It belongs to the IspD/TarI cytidylyltransferase family. IspD subfamily.

The enzyme catalyses 2-C-methyl-D-erythritol 4-phosphate + CTP + H(+) = 4-CDP-2-C-methyl-D-erythritol + diphosphate. It functions in the pathway isoprenoid biosynthesis; isopentenyl diphosphate biosynthesis via DXP pathway; isopentenyl diphosphate from 1-deoxy-D-xylulose 5-phosphate: step 2/6. Catalyzes the formation of 4-diphosphocytidyl-2-C-methyl-D-erythritol from CTP and 2-C-methyl-D-erythritol 4-phosphate (MEP). The polypeptide is 2-C-methyl-D-erythritol 4-phosphate cytidylyltransferase (Xanthomonas oryzae pv. oryzae (strain MAFF 311018)).